Here is a 346-residue protein sequence, read N- to C-terminus: MFARQAIRAAQPLKSQYRRYATESTSGGGSNAALYAGLAAAAGAGAYYFLNQGDNAAKVKDAAKDAEAKAKEAVGQGKSKVEGAVGKAAFTGGDQGFISLKLDSVENINHNTKKFRFELPESDQVSGLQVASALLTKFKGPEMQKPAIRPYTPTSDESEQGFIDLLVKKYPNGVMSEHMHDMVPGQRLDFKGPIPKYPWSANKHDHIALIAGGTGITPMYQLARAIFNNPADKTKVTLVFANVTEEDILLKREFEDLENTYPQRFRAFYVLDNPPKSWSGGKGFVNKELLKTVLPEPKTENVKVFVCGPPGMYKAISGPKVSPSDQGELAGILKELGYSKEQVYKF.

Residues 28–50 (GGSNAALYAGLAAAAGAGAYYFL) traverse the membrane as a helical segment. Residues 95 to 200 (QGFISLKLDS…KGPIPKYPWS (106 aa)) form the FAD-binding FR-type domain. 203–238 (KHDHIALIAGGTGITPMYQLARAIFNNPADKTKVTL) is an FAD binding site.

This sequence belongs to the flavoprotein pyridine nucleotide cytochrome reductase family. FAD serves as cofactor.

Its subcellular location is the mitochondrion outer membrane. It catalyses the reaction 2 Fe(III)-[cytochrome b5] + NADH = 2 Fe(II)-[cytochrome b5] + NAD(+) + H(+). Its function is as follows. May mediate the reduction of outer membrane cytochrome b5. The polypeptide is NADH-cytochrome b5 reductase 2 (mcr1) (Botryotinia fuckeliana (strain B05.10) (Noble rot fungus)).